The chain runs to 229 residues: MKKQESVLVGPSIMGADLTCLGVEAKKLEQAGSDFIHIDIMDGHFVPNLTFGPGIIAAINRSTDLFLEVHAMIYNPFEFIESFVRSGADRIIVHFEASEDIKELLSYIKKCGVQAGLAFSPDTSIEFLPSFLPFCDVVVLMSVYPGFTGQSFLPNTIEKIAFARHAIKTLGLKDSCLIEVDGGIDQQSAPLCRDAGADILVTASYLFEADSLAMEDKILLLRGENYGVK.

Serine 12 is a substrate binding site. Positions 37, 39, and 70 each coordinate a divalent metal cation. Aspartate 39 functions as the Proton acceptor in the catalytic mechanism. Residues histidine 70, 146–149 (GFTG), 181–183 (DGG), and 203–204 (AS) each bind substrate. Residue aspartate 181 participates in a divalent metal cation binding. Aspartate 181 functions as the Proton donor in the catalytic mechanism.

It belongs to the ribulose-phosphate 3-epimerase family. It depends on a divalent metal cation as a cofactor.

It carries out the reaction D-ribulose 5-phosphate = D-xylulose 5-phosphate. Its pathway is carbohydrate degradation. Functionally, catalyzes the reversible epimerization of D-ribulose 5-phosphate to D-xylulose 5-phosphate. This is Ribulose-phosphate 3-epimerase from Chlamydia pneumoniae (Chlamydophila pneumoniae).